A 475-amino-acid polypeptide reads, in one-letter code: Maintenance of mitochondrial morphology protein 1 (475 aa).

Over Met-1–Gly-14 the chain is Lumenal. A helical membrane pass occupies residues Phe-15–Phe-35. At Ser-36–Arg-475 the chain is on the cytoplasmic side. The SMP-LTD domain maps to Pro-80 to Pro-278. Disordered regions lie at residues Asn-321–Gln-381 and Ser-394–Arg-475. Over residues Pro-341–Thr-351 the composition is skewed to pro residues. Polar residues-rich tracts occupy residues Pro-353–Pro-380 and Ser-394–Leu-403. Residues Ser-442–Ser-464 show a composition bias toward low complexity.

Belongs to the MMM1 family. Homodimer. Component of the ER-mitochondria encounter structure (ERMES) or MDM complex, composed of MMM1, MDM10, MDM12 and MDM34. An MMM1 homodimer associates with one molecule of MDM12 on each side in a pairwise head-to-tail manner, and the SMP-LTD domains of MMM1 and MDM12 generate a continuous hydrophobic tunnel for phospholipid trafficking.

The protein resides in the endoplasmic reticulum membrane. Its function is as follows. Component of the ERMES/MDM complex, which serves as a molecular tether to connect the endoplasmic reticulum (ER) and mitochondria. Components of this complex are involved in the control of mitochondrial shape and protein biogenesis, and function in nonvesicular lipid trafficking between the ER and mitochondria. The MDM12-MMM1 subcomplex functions in the major beta-barrel assembly pathway that is responsible for biogenesis of all outer membrane beta-barrel proteins, and acts in a late step after the SAM complex. The MDM10-MDM12-MMM1 subcomplex further acts in the TOM40-specific pathway after the action of the MDM12-MMM1 complex. Essential for establishing and maintaining the structure of mitochondria and maintenance of mtDNA nucleoids. In Cryptococcus neoformans var. neoformans serotype D (strain B-3501A) (Filobasidiella neoformans), this protein is Maintenance of mitochondrial morphology protein 1.